The sequence spans 551 residues: Arginine--tRNA ligase (551 aa).

The 'HIGH' region signature appears at 125-135; it reads ANPTGPLHIGH.

This sequence belongs to the class-I aminoacyl-tRNA synthetase family. In terms of assembly, monomer.

Its subcellular location is the cytoplasm. It carries out the reaction tRNA(Arg) + L-arginine + ATP = L-arginyl-tRNA(Arg) + AMP + diphosphate. The protein is Arginine--tRNA ligase of Nitratidesulfovibrio vulgaris (strain DP4) (Desulfovibrio vulgaris).